The chain runs to 1865 residues: Transcription initiation factor TFIID subunit 1 (1865 aa).

A disordered region spans residues methionine 1–glycine 27. The Protein kinase 1 domain maps to methionine 1–isoleucine 409. The residue at position 131 (serine 131) is a Phosphoserine; by autocatalysis. Residues glutamate 144–aspartate 199 are disordered. Pro residues predominate over residues methionine 151–proline 160. The span at valine 161–aspartate 176 shows a compositional bias: basic and acidic residues. Serine 302 is subject to Phosphoserine; by autocatalysis. A disordered region spans residues proline 509–leucine 530. The segment at lysine 512–lysine 971 is histone acetyltransferase (HAT). Residue lysine 539 is modified to N6-acetyllysine. Residues lysine 544 and lysine 557 each participate in a glycyl lysine isopeptide (Lys-Gly) (interchain with G-Cter in SUMO2) cross-link. Disordered stretches follow at residues proline 964–valine 983 and arginine 1228–arginine 1252. Composition is skewed to basic and acidic residues over residues glutamine 969 to proline 978 and arginine 1228 to lysine 1244. Positions valine 1190–methionine 1268 form a DNA-binding region, HMG box. Residues valine 1337–alanine 1624 are interaction with ASF1A and ASF1B. The Nuclear localization signal motif lies at proline 1346 to valine 1353. Bromo domains lie at arginine 1371–lysine 1479 and leucine 1493–tyrosine 1602. The 446-residue stretch at methionine 1420–glutamate 1865 folds into the Protein kinase 2 domain. The interval glutamate 1625–glutamate 1865 is disordered. Pro residues predominate over residues threonine 1633–proline 1642. Positions aspartate 1646 to glutamine 1682 are enriched in polar residues. Residues serine 1664 and serine 1667 each carry the phosphoserine modification. Acidic residues-rich tracts occupy residues glutamate 1683–glycine 1697 and glutamate 1715–aspartate 1730. Residues serine 1739–serine 1751 show a composition bias toward low complexity. A phosphoserine mark is found at serine 1773, serine 1776, and serine 1794. Over residues lysine 1804–serine 1814 the composition is skewed to polar residues. Acidic residues predominate over residues valine 1820–glutamate 1829. Position 1821 is a phosphoserine (serine 1821). The span at serine 1832–histidine 1841 shows a compositional bias: polar residues.

This sequence belongs to the TAF1 family. In terms of assembly, component of the TFIID basal transcription factor complex, composed of TATA-box-binding protein TBP, and a number of TBP-associated factors (TAFs), including TAF1, TAF2, TAF3, TAF4, TAF5, TAF6, TAF7, TAF8, TAF9, TAF10, TAF11, TAF12 and TAF13. Interacts with TAF7; the interaction is direct. TAF1, when part of the TFIID complex, interacts with C-terminus of TP53. Part of a TFIID-containing RNA polymerase II pre-initiation complex that is composed of TBP and at least GTF2A1, GTF2A2, GTF2E1, GTF2E2, GTF2F1, GTF2H2, GTF2H3, GTF2H4, GTF2H5, GTF2B, TCEA1, ERCC2, ERCC3, TAF1, TAF2, TAF3, TAF4, TAF5, TAF6, TAF7, TAF8, TAF9, TAF10, TAF11, TAF12 and TAF13. Component of some MLL1/MLL complex, at least composed of the core components KMT2A/MLL1, ASH2L, HCFC1/HCF1, WDR5 and RBBP5, as well as the facultative components BACC1, CHD8, E2F6, HSP70, INO80C, KANSL1, LAS1L, MAX, MCRS1, MGA, KAT8/MOF, PELP1, PHF20, PRP31, RING2, RUVB1/TIP49A, RUVB2/TIP49B, SENP3, TAF1, TAF4, TAF6, TAF7, TAF9 and TEX10. RB1 interacts with the N-terminal domain of TAF1. Interacts with ASF1A and ASF1B. Interacts (via bromo domains) with acetylated lysine residues on the N-terminus of histone H1.4, H2A, H2B, H3 and H4 (in vitro). Mg(2+) serves as cofactor. Post-translationally, phosphorylated by casein kinase II in vitro.

It is found in the nucleus. It carries out the reaction L-seryl-[protein] + ATP = O-phospho-L-seryl-[protein] + ADP + H(+). The enzyme catalyses L-threonyl-[protein] + ATP = O-phospho-L-threonyl-[protein] + ADP + H(+). The catalysed reaction is L-lysyl-[protein] + acetyl-CoA = N(6)-acetyl-L-lysyl-[protein] + CoA + H(+). Its activity is regulated as follows. Autophosphorylates on Ser residues. Inhibited by retinoblastoma tumor suppressor protein, RB1. Binding to TAF1 or CIITA inhibits the histone acetyltransferase activity. The TFIID basal transcription factor complex plays a major role in the initiation of RNA polymerase II (Pol II)-dependent transcription. TFIID recognizes and binds promoters with or without a TATA box via its subunit TBP, a TATA-box-binding protein, and promotes assembly of the pre-initiation complex (PIC). The TFIID complex consists of TBP and TBP-associated factors (TAFs), including TAF1, TAF2, TAF3, TAF4, TAF5, TAF6, TAF7, TAF8, TAF9, TAF10, TAF11, TAF12 and TAF13. TAF1 is the largest component and core scaffold of the TFIID complex, involved in nucleating complex assembly. TAF1 forms a promoter DNA binding subcomplex of TFIID, together with TAF7 and TAF2. Contains novel N- and C-terminal Ser/Thr kinase domains which can autophosphorylate or transphosphorylate other transcription factors. Phosphorylates TP53 on 'Thr-55' which leads to MDM2-mediated degradation of TP53. Phosphorylates GTF2A1 and GTF2F1 on Ser residues. Possesses DNA-binding activity. Essential for progression of the G1 phase of the cell cycle. The protein is Transcription initiation factor TFIID subunit 1 of Mesocricetus auratus (Golden hamster).